The primary structure comprises 260 residues: Malonyl-[acyl-carrier protein] O-methyltransferase (260 aa).

It belongs to the methyltransferase superfamily.

It carries out the reaction malonyl-[ACP] + S-adenosyl-L-methionine = malonyl-[ACP] methyl ester + S-adenosyl-L-homocysteine. The protein operates within cofactor biosynthesis; biotin biosynthesis. Converts the free carboxyl group of a malonyl-thioester to its methyl ester by transfer of a methyl group from S-adenosyl-L-methionine (SAM). It allows to synthesize pimeloyl-ACP via the fatty acid synthetic pathway. This is Malonyl-[acyl-carrier protein] O-methyltransferase from Haemophilus influenzae (strain ATCC 51907 / DSM 11121 / KW20 / Rd).